The chain runs to 654 residues: Acetyl-coenzyme A synthetase (654 aa).

CoA is bound by residues 193–196 and Thr-313; that span reads RRGK. ATP is bound by residues 389–391, 413–418, Asp-506, and Arg-521; these read GEP and DTWWQT. Ser-529 is a CoA binding site. Arg-532 is a binding site for ATP. Residues His-545 and Val-548 each contribute to the Mg(2+) site. N6-acetyllysine is present on Lys-619.

This sequence belongs to the ATP-dependent AMP-binding enzyme family. It depends on Mg(2+) as a cofactor. Acetylated. Deacetylation by the SIR2-homolog deacetylase activates the enzyme.

It carries out the reaction acetate + ATP + CoA = acetyl-CoA + AMP + diphosphate. Its function is as follows. Catalyzes the conversion of acetate into acetyl-CoA (AcCoA), an essential intermediate at the junction of anabolic and catabolic pathways. AcsA undergoes a two-step reaction. In the first half reaction, AcsA combines acetate with ATP to form acetyl-adenylate (AcAMP) intermediate. In the second half reaction, it can then transfer the acetyl group from AcAMP to the sulfhydryl group of CoA, forming the product AcCoA. The polypeptide is Acetyl-coenzyme A synthetase (Wolinella succinogenes (strain ATCC 29543 / DSM 1740 / CCUG 13145 / JCM 31913 / LMG 7466 / NCTC 11488 / FDC 602W) (Vibrio succinogenes)).